The following is a 426-amino-acid chain: Acetylglutamate kinase (426 aa).

The acetylglutamate kinase stretch occupies residues 1-252 (MASAKEISQY…PLESSVSITR (252 aa)). Substrate is bound by residues 59–60 (AG), Arg-81, and Asn-170. Positions 253-426 (PADLAKELFT…CATRQPTLLG (174 aa)) are unknown. In terms of domain architecture, N-acetyltransferase spans 274-425 (ERVLRATSWD…HCATRQPTLL (152 aa)).

The protein in the N-terminal section; belongs to the acetylglutamate kinase family. ArgB subfamily.

The protein localises to the cytoplasm. It carries out the reaction N-acetyl-L-glutamate + ATP = N-acetyl-L-glutamyl 5-phosphate + ADP. It participates in amino-acid biosynthesis; L-arginine biosynthesis; N(2)-acetyl-L-ornithine from L-glutamate: step 2/4. The sequence is that of Acetylglutamate kinase (argB) from Xanthomonas campestris pv. campestris (strain ATCC 33913 / DSM 3586 / NCPPB 528 / LMG 568 / P 25).